We begin with the raw amino-acid sequence, 352 residues long: Protein RecA (352 aa).

67-74 (GPESSGKT) is a binding site for ATP.

The protein belongs to the RecA family.

Its subcellular location is the cytoplasm. In terms of biological role, can catalyze the hydrolysis of ATP in the presence of single-stranded DNA, the ATP-dependent uptake of single-stranded DNA by duplex DNA, and the ATP-dependent hybridization of homologous single-stranded DNAs. It interacts with LexA causing its activation and leading to its autocatalytic cleavage. The protein is Protein RecA of Aggregatibacter actinomycetemcomitans (Actinobacillus actinomycetemcomitans).